The primary structure comprises 437 residues: Purple acid phosphatase 21 (437 aa).

An N-terminal signal peptide occupies residues 1–25 (MKKMKIFGFLISFSLFFLSPFVCQA). N-linked (GlcNAc...) asparagine glycosylation is present at Asn-30. Fe cation is bound by residues Asp-152, Asp-179, and Tyr-182. A Zn(2+)-binding site is contributed by Asp-179. Zn(2+) contacts are provided by Asn-212 and His-296. Asn-212 provides a ligand contact to substrate. The active-site Proton donor is the His-306. His-333 provides a ligand contact to Zn(2+). 333-335 (HVH) is a binding site for substrate. Residue His-335 coordinates Fe cation.

The protein belongs to the metallophosphoesterase superfamily. Purple acid phosphatase family. As to quaternary structure, homodimer. Fe cation is required as a cofactor. The cofactor is Zn(2+). As to expression, expressed flowers and siliques.

It is found in the secreted. The catalysed reaction is a phosphate monoester + H2O = an alcohol + phosphate. The chain is Purple acid phosphatase 21 (PAP21) from Arabidopsis thaliana (Mouse-ear cress).